Reading from the N-terminus, the 629-residue chain is tRNA uridine 5-carboxymethylaminomethyl modification enzyme MnmG (629 aa).

Residues 13–18 (GGGHAG), Val125, and Ser180 contribute to the FAD site. 273 to 287 (GPRYCPSIEDKVMRF) lines the NAD(+) pocket. Gln370 serves as a coordination point for FAD.

The protein belongs to the MnmG family. Homodimer. Heterotetramer of two MnmE and two MnmG subunits. FAD serves as cofactor.

It localises to the cytoplasm. In terms of biological role, NAD-binding protein involved in the addition of a carboxymethylaminomethyl (cmnm) group at the wobble position (U34) of certain tRNAs, forming tRNA-cmnm(5)s(2)U34. The protein is tRNA uridine 5-carboxymethylaminomethyl modification enzyme MnmG of Escherichia coli O127:H6 (strain E2348/69 / EPEC).